The following is a 472-amino-acid chain: Siroheme synthase (472 aa).

The segment at 1–203 (MNYLPIFIDI…GKIQEAKADL (203 aa)) is precorrin-2 dehydrogenase /sirohydrochlorin ferrochelatase. NAD(+)-binding positions include 22–23 (DI) and 43–44 (KS). A Phosphoserine modification is found at S128. The uroporphyrinogen-III C-methyltransferase stretch occupies residues 216 to 472 (GEVYLVGGGP…SSKKSYLFGG (257 aa)). P225 provides a ligand contact to S-adenosyl-L-methionine. Catalysis depends on D248, which acts as the Proton acceptor. Catalysis depends on K270, which acts as the Proton donor. Residues 301–303 (GGD), I306, 331–332 (TA), M383, and G412 each bind S-adenosyl-L-methionine.

It in the N-terminal section; belongs to the precorrin-2 dehydrogenase / sirohydrochlorin ferrochelatase family. In the C-terminal section; belongs to the precorrin methyltransferase family.

It carries out the reaction uroporphyrinogen III + 2 S-adenosyl-L-methionine = precorrin-2 + 2 S-adenosyl-L-homocysteine + H(+). The enzyme catalyses precorrin-2 + NAD(+) = sirohydrochlorin + NADH + 2 H(+). The catalysed reaction is siroheme + 2 H(+) = sirohydrochlorin + Fe(2+). It functions in the pathway cofactor biosynthesis; adenosylcobalamin biosynthesis; precorrin-2 from uroporphyrinogen III: step 1/1. Its pathway is cofactor biosynthesis; adenosylcobalamin biosynthesis; sirohydrochlorin from precorrin-2: step 1/1. The protein operates within porphyrin-containing compound metabolism; siroheme biosynthesis; precorrin-2 from uroporphyrinogen III: step 1/1. It participates in porphyrin-containing compound metabolism; siroheme biosynthesis; siroheme from sirohydrochlorin: step 1/1. It functions in the pathway porphyrin-containing compound metabolism; siroheme biosynthesis; sirohydrochlorin from precorrin-2: step 1/1. Functionally, multifunctional enzyme that catalyzes the SAM-dependent methylations of uroporphyrinogen III at position C-2 and C-7 to form precorrin-2 via precorrin-1. Then it catalyzes the NAD-dependent ring dehydrogenation of precorrin-2 to yield sirohydrochlorin. Finally, it catalyzes the ferrochelation of sirohydrochlorin to yield siroheme. The chain is Siroheme synthase from Ruthia magnifica subsp. Calyptogena magnifica.